The chain runs to 318 residues: tRNA uridine(34) hydroxylase (318 aa).

One can recognise a Rhodanese domain in the interval 123–217 (EDDDTVIIDA…YGKDPETKGE (95 aa)). The active-site Cysteine persulfide intermediate is the cysteine 177.

Belongs to the TrhO family.

The enzyme catalyses uridine(34) in tRNA + AH2 + O2 = 5-hydroxyuridine(34) in tRNA + A + H2O. Its function is as follows. Catalyzes oxygen-dependent 5-hydroxyuridine (ho5U) modification at position 34 in tRNAs. The polypeptide is tRNA uridine(34) hydroxylase (Staphylococcus aureus (strain USA300)).